Consider the following 411-residue polypeptide: Arginine deiminase 1 (411 aa).

Cys401 acts as the Amidino-cysteine intermediate in catalysis.

The protein belongs to the arginine deiminase family.

Its subcellular location is the cytoplasm. It catalyses the reaction L-arginine + H2O = L-citrulline + NH4(+). Its pathway is amino-acid degradation; L-arginine degradation via ADI pathway; carbamoyl phosphate from L-arginine: step 1/2. The protein is Arginine deiminase 1 (arcA1) of Staphylococcus epidermidis (strain ATCC 12228 / FDA PCI 1200).